Consider the following 527-residue polypeptide: Peptide chain release factor 3 (527 aa).

The tr-type G domain occupies 9-278; the sequence is DIRRTFAIIS…GLTQWAPKPQ (270 aa). Residues 18–25, 86–90, and 140–143 each bind GTP; these read SHPDAGKT, DTPGH, and NKCD.

This sequence belongs to the TRAFAC class translation factor GTPase superfamily. Classic translation factor GTPase family. PrfC subfamily.

The protein localises to the cytoplasm. Functionally, increases the formation of ribosomal termination complexes and stimulates activities of RF-1 and RF-2. It binds guanine nucleotides and has strong preference for UGA stop codons. It may interact directly with the ribosome. The stimulation of RF-1 and RF-2 is significantly reduced by GTP and GDP, but not by GMP. The protein is Peptide chain release factor 3 of Shewanella denitrificans (strain OS217 / ATCC BAA-1090 / DSM 15013).